The primary structure comprises 835 residues: Cell division control protein 48 (835 aa).

Residues 1-21 are disordered; it reads MGEEHKPLLDASGVDPREEDK. 257–263 is an ATP binding site; sequence PGTGKTL. Residues K305, K322, and K346 each participate in a glycyl lysine isopeptide (Lys-Gly) (interchain with G-Cter in ubiquitin) cross-link. Residues N358 and H394 each contribute to the ATP site. Phosphoserine occurs at positions 472 and 519. K522 participates in a covalent cross-link: Glycyl lysine isopeptide (Lys-Gly) (interchain with G-Cter in ubiquitin). Residue 531 to 536 coordinates ATP; it reads GTGKTL. Glycyl lysine isopeptide (Lys-Gly) (interchain with G-Cter in ubiquitin) cross-links involve residues K539, K594, and K673. The segment covering 720–729 has biased composition (basic and acidic residues); sequence EAEKEVKVEG. A disordered region spans residues 720–746; the sequence is EAEKEVKVEGEDVEMTDEGAKAEQEPE. T735 is subject to Phosphothreonine. A Phosphoserine modification is found at S770. Positions 792–835 are disordered; it reads SNFNFNDAPLGTTATDNANSNNSAPSGAGAAFGSNAEEDDDLYS. A compositionally biased stretch (low complexity) spans 802–826; it reads GTTATDNANSNNSAPSGAGAAFGSN.

This sequence belongs to the AAA ATPase family. In terms of assembly, component of the heterotrimeric CDC48-NPL4-UFD1 ATPase complex. The CDC48-NPL4-UFD1 ATPase complex interacts with the HRD1 ubiquitin ligase complex composed of the E3 ligase HRD1, its cofactors HRD3, USA1 and DER1, substrate recruiting factor YOS9 and CDC48-binding protein UBX2. Interaction between the complexes is mediated by interaction between CDC48-NPL4-UFD1 complex member CDC48 and HRD1 complex member UBX2. Forms a complex composed of CDC48, NPL4, UFD1, UFD2 and SHP1. Forms a complex composed of CDC48, NPL4, UFD1, DOA1, SHP1 and deubiquitinase OTU1; within the complex interacts with DOA1/UFD3 and OTU1 to prevent multiubiquitination of substrates. Interacts with UFD2, to add further ubiquitin moieties; the interaction with UFD2 is prevented by DOA1/UFD3. Forms a complex composed of CDC48, DOA1, deubiquitinase UBP3 and probably BRE5; within the complex interacts with DOA1 and UBP3. Interacts (via C-terminus) with DOA1 (via PUL domain); the interaction is direct. Interacts with NPL4. Interacts with SHP1/UBX1, UBX2, UBX3, UBX4, UBX5, UBX6 and UBX7. Interacts with VMS1; the interaction recruits CDC48 to the mitochondria in response to mitochondrial stress. Component of the ribosome quality control complex (RQC), composed of the E3 ubiquitin ligase RKR1/LTN1, RQC1 and RQC2, as well as CDC48 and its ubiquitin-binding cofactors. RQC forms a stable complex with 60S ribosomal subunits. Interacts with ASE1 and CDC5; the interaction is likely to result in their degradation. Component of the DSCc E3 ligase complexes composed of at least TUL1, DSC2, DSC3, UBX3, CDC48 as well as VLD1 for the vacuole-localized complex or GLD1 for the Golgi/endosome-localized complex.

Its subcellular location is the microsome. The protein localises to the endoplasmic reticulum. It is found in the cytoplasm. The catalysed reaction is ATP + H2O = ADP + phosphate + H(+). With respect to regulation, the first ATP-binding region has low ATPase activity. The second ATP-binding region is responsible for ATPase activity. ATP binding to the first ATP-binding region induces intrinsic activity of the second ATP-binding region. While ATP binding to the first ATP-binding region appears to prevent ATP hydrolysis by the second ATP-binding region, ADP-binding to first region promotes the coordinate and cooperative ATPase cycle of the second ATP-binding region. ATP binding to the first ATP-binding region induces a conformational change, promoting the rotation of the first ATP-binding region relative to the second ATP-binding region in the hexamer. In terms of biological role, ATP-dependent chaperone which probably uses the energy provided by ATP hydrolysis to generate mechanical force to unfold substrate proteins, disassemble protein complexes, and disaggregate protein aggregates. By recruiting and promoting the degradation of ubiquitinated proteins, plays a role in the ubiquitin fusion degradation (UFD) pathway. Has a role in the endoplasmic reticulum-associated degradation (ERAD) pathway which mediates the cytoplasmic elimination of misfolded proteins exported from the ER. Required for the proteasome-dependent processing/activation of MGA2 and SPT23 transcription factors leading to the subsequent expression of OLE1. Has an additional role in the turnover of OLE1 where it targets ubiquitinated OLE1 and other proteins to the ERAD. Regulates ubiquitin-mediated mitochondria protein degradation. Involved in spindle disassembly probably by promoting the degradation of spindle assembly factors ASE1 and CDC5 at the end of mitosis. Component of the ribosome quality control complex (RQC), a ribosome-associated complex that mediates ubiquitination and extraction of incompletely synthesized nascent chains for proteasomal degradation. CDC48 may provide the mechanical force that dislodges the polyubiquitinated nascent peptides from the exit channel. Required for ribophagy, a process which relocalizes ribosomal particles into the vacuole for degradation in response to starvation. Component of the DSC E3 ubiquitin ligase complexes that tag proteins present in Golgi, endosome and vacuole membranes and function in protein homeostasis under non-stress conditions and support a role in protein quality control. Substrate initially binds through the attached polyubiquitin chain to UDF1/NPL4 and then moves through the pore of the ATPase rings and is thereby unfolded. Acts on a broad range of even well-folded proteins via ubiquitin-binding and unfolding to initiate substrate processing. Involved in degradation of mislocalized tail-anchored transmembrane proteins extracted from the mitochondrion outer membrane by MSP1 and ubiquitinated by DOA10. The chain is Cell division control protein 48 from Saccharomyces cerevisiae (strain ATCC 204508 / S288c) (Baker's yeast).